Reading from the N-terminus, the 1290-residue chain is DNA-directed RNA polymerase subunit beta' (1290 aa).

4 residues coordinate Zn(2+): cysteine 60, cysteine 62, cysteine 75, and cysteine 78. The Mg(2+) site is built by aspartate 535, aspartate 537, and aspartate 539. Cysteine 875, cysteine 953, cysteine 960, and cysteine 963 together coordinate Zn(2+).

This sequence belongs to the RNA polymerase beta' chain family. As to quaternary structure, the RNAP catalytic core consists of 2 alpha, 1 beta, 1 beta' and 1 omega subunit. When a sigma factor is associated with the core the holoenzyme is formed, which can initiate transcription. Mg(2+) serves as cofactor. Zn(2+) is required as a cofactor.

The catalysed reaction is RNA(n) + a ribonucleoside 5'-triphosphate = RNA(n+1) + diphosphate. DNA-dependent RNA polymerase catalyzes the transcription of DNA into RNA using the four ribonucleoside triphosphates as substrates. The chain is DNA-directed RNA polymerase subunit beta' from Nocardioides sp. (strain ATCC BAA-499 / JS614).